The following is a 327-amino-acid chain: Zinc transport protein ZntB (327 aa).

Over 1 to 273 the chain is Cytoplasmic; that stretch reads MDAIKGSELQ…ARRTYTMSLM (273 aa). The chain crosses the membrane as a helical span at residues 274-294; it reads AMVFLPSTFLTGLFGVNLGGI. The Periplasmic segment spans residues 295–300; that stretch reads PGNSWH. The helical transmembrane segment at 301–321 threads the bilayer; that stretch reads LGFSLFCLMLVVVIGGVAWWL. The Cytoplasmic segment spans residues 322-327; the sequence is HRSKWL.

Belongs to the CorA metal ion transporter (MIT) (TC 1.A.35) family.

It localises to the cell inner membrane. The catalysed reaction is Zn(2+)(out) + H(+)(out) = Zn(2+)(in) + H(+)(in). Its function is as follows. Zinc transporter. Acts as a Zn(2+):proton symporter, which likely mediates zinc ion uptake. This Klebsiella pneumoniae subsp. pneumoniae (strain ATCC 700721 / MGH 78578) protein is Zinc transport protein ZntB.